The chain runs to 457 residues: Secreted RxLR effector protein 8 (457 aa).

The signal sequence occupies residues 1–19 (MRGTLATALLLVISSRVAT). The RxLR-dEER motif lies at 48–69 (RFLRGSRKQRDDLAPTAADENR). Asn68 carries an N-linked (GlcNAc...) asparagine glycan. Disordered stretches follow at residues 110–188 (RLSL…ALKS) and 398–457 (RQTI…RSSS). Residues 135 to 152 (SASTSTTSDIATSSSRTS) are compositionally biased toward low complexity. Composition is skewed to polar residues over residues 153–163 (NQRTPKTQASL) and 176–187 (SKNQFKKSTALK). Residues 442-457 (IKSKDHARKKRPRSSS) are compositionally biased toward basic residues.

This sequence belongs to the RxLR effector family.

The protein localises to the secreted. Its subcellular location is the host nucleus. Its function is as follows. Secreted effector that completely suppresses the host cell death induced by cell death-inducing proteins. The protein is Secreted RxLR effector protein 8 of Plasmopara viticola (Downy mildew of grapevine).